We begin with the raw amino-acid sequence, 434 residues long: Histidine--tRNA ligase (434 aa).

A disordered region spans residues 412–434 (DQTTVPVEAFPGDHDAPTYEDVV).

The protein belongs to the class-II aminoacyl-tRNA synthetase family.

It is found in the cytoplasm. It carries out the reaction tRNA(His) + L-histidine + ATP = L-histidyl-tRNA(His) + AMP + diphosphate + H(+). The protein is Histidine--tRNA ligase of Haloquadratum walsbyi (strain DSM 16790 / HBSQ001).